Consider the following 103-residue polypeptide: Phosphoribosyl-ATP pyrophosphatase (103 aa).

The interval 79–103 (SVQAELERREGKLSTTRDRKEIDEL) is disordered. Residues 83–103 (ELERREGKLSTTRDRKEIDEL) show a composition bias toward basic and acidic residues.

It belongs to the PRA-PH family.

The protein resides in the cytoplasm. The catalysed reaction is 1-(5-phospho-beta-D-ribosyl)-ATP + H2O = 1-(5-phospho-beta-D-ribosyl)-5'-AMP + diphosphate + H(+). Its pathway is amino-acid biosynthesis; L-histidine biosynthesis; L-histidine from 5-phospho-alpha-D-ribose 1-diphosphate: step 2/9. In Listeria welshimeri serovar 6b (strain ATCC 35897 / DSM 20650 / CCUG 15529 / CIP 8149 / NCTC 11857 / SLCC 5334 / V8), this protein is Phosphoribosyl-ATP pyrophosphatase.